The chain runs to 448 residues: Gamete and mating-type specific protein A (448 aa).

Positions 1-19 are cleaved as a signal peptide; the sequence is MKLILVLLCLISTLFVVKG. An SCP domain is found at 30–157; the sequence is VSYHNKWRSS…PDKSEVSCSY (128 aa). Residues Asn55, Asn98, and Asn119 are each glycosylated (N-linked (GlcNAc...) asparagine). The tract at residues 171 to 242 is disordered; it reads PKTTTPAPTT…PTTPAPTSTL (72 aa). Pro residues predominate over residues 178 to 236; that stretch reads PTTPAPTTPKPTTPAPTTPKPTTPAPTTPKPTTPAPTTPKPTTPAPTTPKPTTPAPTTP. Active-site residues include Cys262, His397, and Asn415.

Belongs to the peptidase C1 family.

It localises to the secreted. Its function is as follows. Thiol protease that seems to be involved in the sexual development. The polypeptide is Gamete and mating-type specific protein A (gmsA) (Dictyostelium discoideum (Social amoeba)).